The chain runs to 348 residues: Farnesoic acid carboxyl-O-methyltransferase (348 aa).

Residue Tyr-16 participates in S-adenosyl-L-methionine binding. Residues Tyr-16 and 19 to 23 contribute to the substrate site; that span reads HSKYQ. S-adenosyl-L-methionine contacts are provided by residues Gly-57, 57 to 58, Asn-63, 94 to 97, 123 to 125, and 140 to 142; these read GC, FNDS, SFF, and SYS. Position 141 to 145 (141 to 145) interacts with substrate; that stretch reads YSLHF. Residues Asn-162, Asp-247, and Phe-249 each coordinate Mg(2+).

This sequence belongs to the methyltransferase superfamily. SABATH family. In terms of assembly, homodimer. Requires Mg(2+) as cofactor. As to expression, mostly expressed in leaves and, at very low levels, in roots, stems, flowers and siliques.

The enzyme catalyses (2E,6E)-farnesoate + S-adenosyl-L-methionine = methyl (2E,6E)-farnesoate + S-adenosyl-L-homocysteine. It carries out the reaction juvenile hormone III carboxylate + S-adenosyl-L-methionine = juvenile hormone III + S-adenosyl-L-homocysteine. It participates in sesquiterpene biosynthesis. With respect to regulation, activated by Mn(2+) ions. Strongly inhibited by Cu(2+), Zn(2+), Fe(3+) and Fe(2+) ions. Moderately inhibited by Na(+) and Ca(2+) ions. Rapidly degraded at temperatures above 40 degrees Celsius. Functionally, may catalyze the production of the insect juvenile hormone methyl farnesoate (MeFA) to trigger defense against insect herbivory. The polypeptide is Farnesoic acid carboxyl-O-methyltransferase (Arabidopsis thaliana (Mouse-ear cress)).